Reading from the N-terminus, the 166-residue chain is PR-toxin biosynthesis cluster protein 10 (166 aa).

Its function is as follows. Part of the gene cluster that mediates the biosynthesis of PR-toxin, a bicyclic sesquiterpene belonging to the eremophilane class and acting as a mycotoxin. The first step of the pathway is catalyzed by the aristolochene synthase which performs the cyclization of trans,trans-farnesyl diphosphate (FPP) to the bicyclic sesquiterpene aristolochene. Following the formation of aristolochene, the non-oxygenated aristolochene is converted to the trioxygenated intermediate eremofortin B, via 7-epi-neopetasone. This conversion appears to involve three enzymes, a hydroxysterol oxidase-like enzyme, the quinone-oxidase prx3 that forms the quinone-type-structure in the bicyclic nucleus of aristolochene with the C8-oxo group and the C-3 hydroxyl group, and the P450 monooxygenase prx9 that introduces the epoxide at the double bond between carbons 1 and 2. No monoxy or dioxy-intermediates have been reported to be released to the broth, so these three early oxidative reactions may be coupled together. Eremofortin B is further oxidized by another P450 monooxygenase, that introduces a second epoxide between carbons 7 and 11 prior to acetylation to eremofortin A by the acetyltransferase prx11. The second epoxidation may be performed by a second P450 monooxygenase. After the acetylation step, eremofortin A is converted to eremofortin C and then to PR-toxin. First the conversion of eremofortin A to eremofortin C proceeds by oxidation of the side chain of the molecule at C-12 and is catalyzed by the short-chain oxidoreductase prx1. The cytochrome P450 monooxygenase prx8 also plays a role in this step. The primary alcohol formed at C-12 is finally oxidized by the short-chain alcohol dehydrogenase prx4 that forms PR-toxin. The sequence is that of PR-toxin biosynthesis cluster protein 10 from Penicillium rubens (strain ATCC 28089 / DSM 1075 / NRRL 1951 / Wisconsin 54-1255) (Penicillium chrysogenum).